The following is a 209-amino-acid chain: MSTLVIVRHGQSEGNARGEFTGTSDVPLTQEGWSESRRAGSLLANLGISFDIAFSSALLRTVDTCRAILNETNGDLLEPIRRTELNERDYGQLTGINKNVARERWGQDVVQVWRRSYSTPPPGGESIRDISARVLPFLISEVFPPLLRGKSVLVVAHGNTIRSLKQGIERLTIQDTLAIESPTAAPTVYRIASDLSIIEKTNVLVGTVC.

Substrate contacts are provided by residues 8-15 (RHGQSEGN), 21-22 (TG), Arg-60, 87-90 (ERDY), Lys-98, 114-115 (RR), and 158-159 (GN). His-9 acts as the Tele-phosphohistidine intermediate in catalysis. Glu-87 functions as the Proton donor/acceptor in the catalytic mechanism.

Belongs to the phosphoglycerate mutase family. BPG-dependent PGAM subfamily. In terms of assembly, homodimer.

It catalyses the reaction (2R)-2-phosphoglycerate = (2R)-3-phosphoglycerate. The protein operates within carbohydrate degradation; glycolysis; pyruvate from D-glyceraldehyde 3-phosphate: step 3/5. Functionally, catalyzes the interconversion of 2-phosphoglycerate and 3-phosphoglycerate. In Rhizobium etli (strain ATCC 51251 / DSM 11541 / JCM 21823 / NBRC 15573 / CFN 42), this protein is 2,3-bisphosphoglycerate-dependent phosphoglycerate mutase.